The sequence spans 1482 residues: MIERGKFRSLTLINWNGFFARTFDLDELVTTLSGGNGAGKSTTMAAFVTALIPDLTLLHFRNTTEAGATSGSRDKGLHGKLKAGVCYSVLDVVNSRHQRVLVGVRLQQVAGRDRKVDIKPFAIQGLPSAILPTQLLTETLNDRQARVLSLNELKDKIDTMEGVQLKQFNSITDYHSLMFDLGVVARRLRSASDRSKYYRLIEASLYGGISSAITRSLRDYLLPENGGVRKAFQDMEAALRENRMTLEAIRVTQSDRDLFKHLISEATNYVAADYMRHANERRIHLDQALELRRELFSSRKQLAAEQYKHVHMARELSEHAGAEGDLETDYQAASDHLNLVQTALRQQEKIERYEADLEELQIRLEEQSEVVAEAAEQQEENEARAEAAELEVDELKSQLADYQQALDVQQTRAIQYQQALTALERARELCHLPDLSADSADEWLDTYQAKEQEATERLLSLEQKMSVAQTAHSQFEQAYQLVASINGPVSRAEAWDVARELLRDASQQRHLAEQVQPLRMRLSELEQRLREQQDAERLLAEFCKRQGKNYDPEDLEALNDELEARIAALSDSVSQAGEQRMTLRQELEQIQSRVKTLTSHAPAWLAAQNSLNQISEQSGETFESGQQVTEYLQQLLEREREAIVERDEVGARKRAVDEEIERLSQPGGAEDARLNALAERFGGVLLSEIYDDVSFDDAPYFSALYGPSRHAIVVPDLSRVRDLLDGLEDCPEDLYLIEGDPQSFDDSVFSVEELEKAVVVKVAERQWRYSRFPSVPLFGRAARESRIESLHAEREALSERYATLSFDVQKTQRLHQAFSRFVGQHLAVAFEADPEAEIRKLNTRRSEIERAISQHENDNQQQRVQFEQAKEGVAQLNRLLPRLSLLADDSLADRVEEIQERLAEAQDAARFLSQHGKALAKLEPVASVLQSDPEQFDQLKQDYEQARQTQRDARQQAFALSEVVQRRAHFSYSDSAQMLNGNTDLNEKLRQRLEQAEAERTRAREALRTHAAKLSQYHQVLASLKSSFDTKKELLGDLQRELQDIGVRADAGAEERARQRRDELHTRLSNNRSRRNQLEKQLTLCEAEMDNLTRSLKRLERNYHEMREQVVSAKAGWCAVMRMVKDNGVERRLHRRELAYHSGDDLRSMSDKALGALRLAVADNEHLRDVLRLSEDPKRPERKIQFFVAVYQHLRERIRQDIIRTDDPVEAIEQMEIELGRLTEELTSREQKLAISSRSVANIIRKTIQREQNRIRMLNQGLQSVSFGQVNSVRLNVNVRESHATLLEVLAEQHEQHQDLFNSNRLTFSEALAKLWQRLNPQIDMGQRTAQTIGEELLDYRNYLEMEVEVNRGSDGWLRAESGALSTGEAIGTGMSILVMVVQSWEDESSRLRGKDISPCRLLFLDEAARLDARSIATLFELCERLQMQLIIAAPENISPEKGTTYKLVRKVFQNHEHVHVVGLRGFAAPPADALPGPAEVS.

34-41 is an ATP binding site; it reads GGNGAGKS. 6 coiled-coil regions span residues 337-418, 444-472, 509-601, 781-805, 835-1116, and 1210-1265; these read LNLV…QYQQ, LDTY…QTAH, RHLA…TSHA, AARE…ATLS, EAEI…AKAG, and EAIE…LQSV. Positions 666–783 are flexible hinge; the sequence is PGGAEDARLN…SVPLFGRAAR (118 aa). Positions 1049–1077 are disordered; it reads ADAGAEERARQRRDELHTRLSNNRSRRNQ. Positions 1051 to 1066 are enriched in basic and acidic residues; that stretch reads AGAEERARQRRDELHT.

The protein belongs to the SMC family. MukB subfamily. Homodimerization via its hinge domain. Binds to DNA via its C-terminal region. Interacts, and probably forms a ternary complex, with MukE and MukF via its C-terminal region. The complex formation is stimulated by calcium or magnesium. Interacts with tubulin-related protein FtsZ.

It localises to the cytoplasm. The protein localises to the nucleoid. Its function is as follows. Plays a central role in chromosome condensation, segregation and cell cycle progression. Functions as a homodimer, which is essential for chromosome partition. Involved in negative DNA supercoiling in vivo, and by this means organize and compact chromosomes. May achieve or facilitate chromosome segregation by condensation DNA from both sides of a centrally located replisome during cell division. In Cronobacter sakazakii (strain ATCC BAA-894) (Enterobacter sakazakii), this protein is Chromosome partition protein MukB.